Reading from the N-terminus, the 363-residue chain is Chorismate synthase (363 aa).

Residue R48 coordinates NADP(+). FMN contacts are provided by residues 125 to 127, 238 to 239, G278, 293 to 297, and R319; these read RSS, NA, and KPTAS.

The protein belongs to the chorismate synthase family. As to quaternary structure, homotetramer. FMNH2 is required as a cofactor.

The catalysed reaction is 5-O-(1-carboxyvinyl)-3-phosphoshikimate = chorismate + phosphate. It functions in the pathway metabolic intermediate biosynthesis; chorismate biosynthesis; chorismate from D-erythrose 4-phosphate and phosphoenolpyruvate: step 7/7. Catalyzes the anti-1,4-elimination of the C-3 phosphate and the C-6 proR hydrogen from 5-enolpyruvylshikimate-3-phosphate (EPSP) to yield chorismate, which is the branch point compound that serves as the starting substrate for the three terminal pathways of aromatic amino acid biosynthesis. This reaction introduces a second double bond into the aromatic ring system. The protein is Chorismate synthase of Acinetobacter baumannii (strain SDF).